A 1205-amino-acid chain; its full sequence is Nitric oxide synthase 3 (1205 aa).

The tract at residues 1-73 (MGNLKSVGQE…PPEGPKFPRV (73 aa)) is disordered. A lipid anchor (N-myristoyl glycine) is attached at G2. Residues C15 and C26 are each lipidated (S-palmitoyl cysteine). A compositionally biased stretch (gly residues) spans 15–27 (CGLGLGLGLGLCG). Residues 33–47 (TPAPEPSRAPAPATP) show a composition bias toward pro residues. Positions 96 and 101 each coordinate Zn(2+). The segment at 100–488 (RCLGSLVLPR…PDPWKGSAAK (389 aa)) is interaction with NOSIP. Residue S104 participates in (6R)-L-erythro-5,6,7,8-tetrahydrobiopterin binding. A Phosphoserine; by CDK5 modification is found at S116. Residue C186 participates in heme b binding. Residues Q249, W358, Y359, E363, and N368 each coordinate L-arginine. 3 residues coordinate (6R)-L-erythro-5,6,7,8-tetrahydrobiopterin: A448, W449, and F462. A heme b-binding site is contributed by Y477. Residues 492-512 (IARKKTFKEVANAVKISASLM) are calmodulin-binding. The residue at position 497 (T497) is a Phosphothreonine; by AMPK. In terms of domain architecture, Flavodoxin-like spans 522-705 (ASILYASETV…AFRGWAQAAF (184 aa)). The FMN site is built by S528, E529, T530, R532, S574, and T575. Phosphoserine occurs at positions 617, 635, and 640. Residues S656, C663, E689, and Q693 each coordinate FMN. An FAD-binding FR-type domain is found at 758–1004 (RKMFQATVLS…IRAAPSFRLP (247 aa)). Residue R778 coordinates NADP(+). An FAD-binding site is contributed by H800. Residues 820–848 (EDPTPPTESVGVEQLEKGSPGGPPPSWVR) are disordered. S838 carries the post-translational modification Phosphoserine. Positions 940, 942, 943, 958, 960, 964, 977, 978, and 979 each coordinate FAD. Positions 1018, 1051, 1080, 1081, 1087, 1089, and 1091 each coordinate NADP(+). T1177 is modified (phosphothreonine). S1179 carries the post-translational modification Phosphoserine; by AMPK. Position 1181 is a phosphoserine (S1181).

The protein belongs to the NOS family. In terms of assembly, homodimer. Interacts with NOSIP and NOSTRIN. Interacts with HSP90AB1. Forms a complex with ASL, ASS1 and SLC7A1; the complex regulates cell-autonomous L-arginine synthesis and citrulline recycling while channeling extracellular L-arginine to nitric oxide synthesis pathway. Heme b is required as a cofactor. The cofactor is FAD. It depends on FMN as a cofactor. Requires (6R)-L-erythro-5,6,7,8-tetrahydrobiopterin as cofactor. Phosphorylation by AMPK at Ser-1179 in the presence of Ca(2+)-calmodulin (CaM) activates activity. In absence of Ca(2+)-calmodulin, AMPK also phosphorylates Thr-497, resulting in inhibition of activity. Phosphorylation of Ser-116 by CDK5 reduces activity.

The protein localises to the membrane. Its subcellular location is the caveola. The protein resides in the cytoplasm. It is found in the cytoskeleton. It localises to the golgi apparatus. The protein localises to the cell membrane. The enzyme catalyses 2 L-arginine + 3 NADPH + 4 O2 + H(+) = 2 L-citrulline + 2 nitric oxide + 3 NADP(+) + 4 H2O. Stimulated by calcium/calmodulin. Inhibited by NOSIP and NOSTRIN. Produces nitric oxide (NO) which is implicated in vascular smooth muscle relaxation through a cGMP-mediated signal transduction pathway. NO mediates vascular endothelial growth factor (VEGF)-induced angiogenesis in coronary vessels and promotes blood clotting through the activation of platelets. The polypeptide is Nitric oxide synthase 3 (NOS3) (Sus scrofa (Pig)).